Reading from the N-terminus, the 173-residue chain is Bifunctional protein PyrR (173 aa).

Residues 93 to 105 carry the PRPP-binding motif; it reads VILVDDVLYTGRT.

This sequence belongs to the purine/pyrimidine phosphoribosyltransferase family. PyrR subfamily. In terms of assembly, homodimer and homohexamer; in equilibrium.

The enzyme catalyses UMP + diphosphate = 5-phospho-alpha-D-ribose 1-diphosphate + uracil. Its function is as follows. Regulates transcriptional attenuation of the pyrimidine nucleotide (pyr) operon by binding in a uridine-dependent manner to specific sites on pyr mRNA. This disrupts an antiterminator hairpin in the RNA and favors formation of a downstream transcription terminator, leading to a reduced expression of downstream genes. Also displays a weak uracil phosphoribosyltransferase activity which is not physiologically significant. The chain is Bifunctional protein PyrR from Streptococcus thermophilus (strain ATCC BAA-491 / LMD-9).